Consider the following 373-residue polypeptide: Flagellar P-ring protein (373 aa).

Residues Met1–Ala28 form the signal peptide.

The protein belongs to the FlgI family. In terms of assembly, the basal body constitutes a major portion of the flagellar organelle and consists of four rings (L,P,S, and M) mounted on a central rod.

Its subcellular location is the periplasm. The protein resides in the bacterial flagellum basal body. Its function is as follows. Assembles around the rod to form the L-ring and probably protects the motor/basal body from shearing forces during rotation. This is Flagellar P-ring protein from Rhodopseudomonas palustris (strain ATCC BAA-98 / CGA009).